Here is a 343-residue protein sequence, read N- to C-terminus: N-acetyl-gamma-glutamyl-phosphate reductase (343 aa).

Cys-147 is a catalytic residue.

This sequence belongs to the NAGSA dehydrogenase family. Type 1 subfamily.

The protein resides in the cytoplasm. It catalyses the reaction N-acetyl-L-glutamate 5-semialdehyde + phosphate + NADP(+) = N-acetyl-L-glutamyl 5-phosphate + NADPH + H(+). It functions in the pathway amino-acid biosynthesis; L-arginine biosynthesis; N(2)-acetyl-L-ornithine from L-glutamate: step 3/4. Catalyzes the NADPH-dependent reduction of N-acetyl-5-glutamyl phosphate to yield N-acetyl-L-glutamate 5-semialdehyde. This chain is N-acetyl-gamma-glutamyl-phosphate reductase, found in Listeria innocua serovar 6a (strain ATCC BAA-680 / CLIP 11262).